The following is a 333-amino-acid chain: Tetraacyldisaccharide 4'-kinase (333 aa).

Position 55 to 62 (55 to 62 (SVGGNGKT)) interacts with ATP.

The protein belongs to the LpxK family.

The catalysed reaction is a lipid A disaccharide + ATP = a lipid IVA + ADP + H(+). It functions in the pathway glycolipid biosynthesis; lipid IV(A) biosynthesis; lipid IV(A) from (3R)-3-hydroxytetradecanoyl-[acyl-carrier-protein] and UDP-N-acetyl-alpha-D-glucosamine: step 6/6. Its function is as follows. Transfers the gamma-phosphate of ATP to the 4'-position of a tetraacyldisaccharide 1-phosphate intermediate (termed DS-1-P) to form tetraacyldisaccharide 1,4'-bis-phosphate (lipid IVA). The chain is Tetraacyldisaccharide 4'-kinase from Aeromonas hydrophila subsp. hydrophila (strain ATCC 7966 / DSM 30187 / BCRC 13018 / CCUG 14551 / JCM 1027 / KCTC 2358 / NCIMB 9240 / NCTC 8049).